The primary structure comprises 342 residues: GTPase Obg (342 aa).

One can recognise an Obg domain in the interval 1–159 (MQFIDRAEIE…RNLRLELKLL (159 aa)). One can recognise an OBG-type G domain in the interval 160–328 (AEVGIIGLPN…LLQAIWHRLD (169 aa)). Residues 166 to 173 (GLPNAGKS), 191 to 195 (FTTLV), 213 to 216 (DIPG), 280 to 283 (NKVD), and 309 to 311 (SAV) contribute to the GTP site. Ser173 and Thr193 together coordinate Mg(2+).

Belongs to the TRAFAC class OBG-HflX-like GTPase superfamily. OBG GTPase family. As to quaternary structure, monomer. Requires Mg(2+) as cofactor.

The protein localises to the cytoplasm. An essential GTPase which binds GTP, GDP and possibly (p)ppGpp with moderate affinity, with high nucleotide exchange rates and a fairly low GTP hydrolysis rate. Plays a role in control of the cell cycle, stress response, ribosome biogenesis and in those bacteria that undergo differentiation, in morphogenesis control. In Crocosphaera subtropica (strain ATCC 51142 / BH68) (Cyanothece sp. (strain ATCC 51142)), this protein is GTPase Obg.